The sequence spans 318 residues: Ribosomal RNA small subunit methyltransferase A (318 aa).

S-adenosyl-L-methionine-binding residues include N40, V42, G67, E88, D118, and N137. A compositionally biased stretch (basic and acidic residues) spans 295–305 (SADRGGTDREG). Positions 295 to 318 (SADRGGTDREGTSPPTAGQGAPAR) are disordered.

It belongs to the class I-like SAM-binding methyltransferase superfamily. rRNA adenine N(6)-methyltransferase family. RsmA subfamily.

Its subcellular location is the cytoplasm. The enzyme catalyses adenosine(1518)/adenosine(1519) in 16S rRNA + 4 S-adenosyl-L-methionine = N(6)-dimethyladenosine(1518)/N(6)-dimethyladenosine(1519) in 16S rRNA + 4 S-adenosyl-L-homocysteine + 4 H(+). Specifically dimethylates two adjacent adenosines (A1518 and A1519) in the loop of a conserved hairpin near the 3'-end of 16S rRNA in the 30S particle. May play a critical role in biogenesis of 30S subunits. In Mycolicibacterium paratuberculosis (strain ATCC BAA-968 / K-10) (Mycobacterium paratuberculosis), this protein is Ribosomal RNA small subunit methyltransferase A.